The primary structure comprises 218 residues: Kappa-scoloptoxin(11)-Ssd1b (218 aa).

A signal peptide spans 1 to 16 (MFYSHLLFFTFTFACS). A propeptide spanning residues 17–25 (SSLNRKTKR) is cleaved from the precursor.

Post-translationally, contains 8 disulfide bonds. Expressed by the venom gland.

The protein resides in the secreted. Voltage-gated potassium channel inhibitor. This Scolopendra dehaani (Thai centipede) protein is Kappa-scoloptoxin(11)-Ssd1b.